The chain runs to 309 residues: Probable pyridoxal 5'-phosphate synthase subunit PDX1 (309 aa).

Aspartate 40 contributes to the D-ribose 5-phosphate binding site. Lysine 97 (schiff-base intermediate with D-ribose 5-phosphate) is an active-site residue. Glycine 169 contacts D-ribose 5-phosphate. Residue arginine 181 participates in D-glyceraldehyde 3-phosphate binding. D-ribose 5-phosphate is bound by residues glycine 230 and 251-252; that span reads GS.

It belongs to the PdxS/SNZ family.

It catalyses the reaction aldehydo-D-ribose 5-phosphate + D-glyceraldehyde 3-phosphate + L-glutamine = pyridoxal 5'-phosphate + L-glutamate + phosphate + 3 H2O + H(+). It functions in the pathway cofactor biosynthesis; pyridoxal 5'-phosphate biosynthesis. In terms of biological role, catalyzes the formation of pyridoxal 5'-phosphate from ribose 5-phosphate (RBP), glyceraldehyde 3-phosphate (G3P) and ammonia. The ammonia is provided by PDX2. Can also use ribulose 5-phosphate and dihydroxyacetone phosphate as substrates, resulting from enzyme-catalyzed isomerization of RBP and G3P, respectively. Also plays an indirect role in resistance to singlet oxygen-generating photosensitizers. The sequence is that of Probable pyridoxal 5'-phosphate synthase subunit PDX1 (PDX1) from Ginkgo biloba (Ginkgo).